A 170-amino-acid chain; its full sequence is Large ribosomal subunit protein uL15 (170 aa).

The span at 1-12 shows a compositional bias: basic and acidic residues; that stretch reads MKLHDLRPAEGS. Residues 1 to 50 are disordered; the sequence is MKLHDLRPAEGSHRKRKRIGRGHGSGKVKTGGKGMMGQKARSGPGPYRTF. Over residues 13-26 the composition is skewed to basic residues; it reads HRKRKRIGRGHGSG.

The protein belongs to the universal ribosomal protein uL15 family. Part of the 50S ribosomal subunit.

In terms of biological role, binds to the 23S rRNA. The polypeptide is Large ribosomal subunit protein uL15 (Chloroflexus aggregans (strain MD-66 / DSM 9485)).